Here is a 139-residue protein sequence, read N- to C-terminus: Ribosomal RNA large subunit methyltransferase H (139 aa).

Residues L56, G88, and 107–112 each bind S-adenosyl-L-methionine; that span reads LSLMTF.

The protein belongs to the RNA methyltransferase RlmH family. In terms of assembly, homodimer.

It is found in the cytoplasm. The catalysed reaction is pseudouridine(1915) in 23S rRNA + S-adenosyl-L-methionine = N(3)-methylpseudouridine(1915) in 23S rRNA + S-adenosyl-L-homocysteine + H(+). Specifically methylates the pseudouridine at position 1915 (m3Psi1915) in 23S rRNA. In Coprothermobacter proteolyticus (strain ATCC 35245 / DSM 5265 / OCM 4 / BT), this protein is Ribosomal RNA large subunit methyltransferase H.